The primary structure comprises 302 residues: 1,2-dihydroxynaphthalene dioxygenase (302 aa).

VOC domains are found at residues 9-124 (ELGY…IFWG) and 149-270 (GLGH…PGWR). H152 provides a ligand contact to Fe cation. Substrate is bound by residues H152, 199-200 (DH), H215, and Y256. H215 is a Fe cation binding site. Fe cation is bound at residue E266.

The protein belongs to the extradiol ring-cleavage dioxygenase family. It depends on Fe(2+) as a cofactor.

It carries out the reaction naphthalene-1,2-diol + O2 = 2-hydroxychromene-2-carboxylate + H(+). Its pathway is aromatic compound metabolism; naphthalene degradation. In terms of biological role, involved in the naphthalene catabolic pathway. Catalyzes the meta-cleavage of 1,2-dihydroxynaphthalene (1,2-DHN) to yield 2-hydroxychromene-2-carboxylic acid. The chain is 1,2-dihydroxynaphthalene dioxygenase (nahC) from Pseudomonas putida (Arthrobacter siderocapsulatus).